Consider the following 271-residue polypeptide: DNA-binding protein HEXBP (271 aa).

Basic and acidic residues-rich tracts occupy residues 1-12 and 21-42; these read MSETEDVKRPRT and CGKE…DERS. The disordered stretch occupies residues 1-42; that stretch reads MSETEDVKRPRTESSTSCRNCGKEGHYARECPEADSKGDERS. 4 consecutive CCHC-type zinc fingers follow at residues 16–33, 43–60, 70–87, and 97–114; these read TSCR…ECPE, TTCF…ECPN, MTCF…DCPN, and FECY…DCPS. Residues 107–136 form a disordered region; sequence HLSRDCPSSQGGSRGGYGQKRGRSGAQGGY. Residues 118-136 are compositionally biased toward gly residues; it reads GSRGGYGQKRGRSGAQGGY. 5 CCHC-type zinc fingers span residues 140–157, 168–185, 196–213, 222–239, and 253–270; these read RTCY…DCPN, RKCY…ECPS, RACY…ECPE, and RTCY…DCPS.

It localises to the nucleus. Binds to single-stranded DNA located in the 5' hexanucleotide repeat region of the L.major leishmanolysin (GP63) gene. This is DNA-binding protein HEXBP (HEXBP) from Leishmania major.